A 325-amino-acid polypeptide reads, in one-letter code: Fe-S cluster assembly protein DRE2 (325 aa).

An N-terminal SAM-like domain region spans residues 1–169; that stretch reads MTLGDRLGLI…KKKDAGNNEQ (169 aa). The segment at 170–222 is linker; sequence VVKLSVEDVEDDLDDDPEVSNELLSKAKFFNSLSLNQDAEIDENNLIKSTDGD. Residues C229, C240, C243, and C245 each contribute to the [2Fe-2S] cluster site. The interval 229-245 is fe-S binding site A; that stretch reads CGKTNTKKRRACKDCTC. C288, C291, C299, and C302 together coordinate [4Fe-4S] cluster. 2 consecutive short sequence motifs (cx2C motif) follow at residues 288 to 291 and 299 to 302; these read CGSC and CSGC. The fe-S binding site B stretch occupies residues 288–302; it reads CGSCSLGDAFRCSGC.

This sequence belongs to the anamorsin family. In terms of assembly, monomer. Interacts with TAH18. Interacts with MIA40. Requires [2Fe-2S] cluster as cofactor. The cofactor is [4Fe-4S] cluster.

The protein localises to the cytoplasm. Its subcellular location is the mitochondrion intermembrane space. Functionally, component of the cytosolic iron-sulfur (Fe-S) protein assembly (CIA) machinery required for the maturation of extramitochondrial Fe-S proteins. Part of an electron transfer chain functioning in an early step of cytosolic Fe-S biogenesis, facilitating the de novo assembly of a [4Fe-4S] cluster on the scaffold complex CFD1-NBP35. Electrons are transferred to DRE2 from NADPH via the FAD- and FMN-containing protein TAH18. TAH18-DRE2 are also required for the assembly of the diferric tyrosyl radical cofactor of ribonucleotide reductase (RNR), probably by providing electrons for reduction during radical cofactor maturation in the catalytic small subunit RNR2. In Vanderwaltozyma polyspora (strain ATCC 22028 / DSM 70294 / BCRC 21397 / CBS 2163 / NBRC 10782 / NRRL Y-8283 / UCD 57-17) (Kluyveromyces polysporus), this protein is Fe-S cluster assembly protein DRE2.